Reading from the N-terminus, the 245-residue chain is tRNA1(Val) (adenine(37)-N6)-methyltransferase (245 aa).

It belongs to the methyltransferase superfamily. tRNA (adenine-N(6)-)-methyltransferase family.

It localises to the cytoplasm. The enzyme catalyses adenosine(37) in tRNA1(Val) + S-adenosyl-L-methionine = N(6)-methyladenosine(37) in tRNA1(Val) + S-adenosyl-L-homocysteine + H(+). Its function is as follows. Specifically methylates the adenine in position 37 of tRNA(1)(Val) (anticodon cmo5UAC). This Shigella dysenteriae serotype 1 (strain Sd197) protein is tRNA1(Val) (adenine(37)-N6)-methyltransferase.